The following is a 327-amino-acid chain: Small ribosomal subunit protein uS4m (327 aa).

One can recognise an S4 RNA-binding domain in the interval 96 to 154 (SRLDMSIHRALFASSALQARQLVLHGKVHVNGKPERRAYRQLLPGDLVTVDQKSVMNCV). Residues 156-173 (ASSNNTPSIQDGKQTEQV) are compositionally biased toward polar residues. The segment at 156–199 (ASSNNTPSIQDGKQTEQVSSKDGENEKKKDNDDDLFEQTSNGKL) is disordered. The segment covering 174–186 (SSKDGENEKKKDN) has biased composition (basic and acidic residues).

This sequence belongs to the universal ribosomal protein uS4 family. Component of the mitochondrial small ribosomal subunit (mt-SSU). Mature yeast 74S mitochondrial ribosomes consist of a small (37S) and a large (54S) subunit. The 37S small subunit contains a 15S ribosomal RNA (15S mt-rRNA) and at least 32 different proteins. The 54S large subunit contains a 21S rRNA (21S mt-rRNA) and at least 45 different proteins. uS3m, uS4m and uS5m form the narrow entry site of the mRNA channel.

It is found in the mitochondrion. Component of the mitochondrial ribosome (mitoribosome), a dedicated translation machinery responsible for the synthesis of mitochondrial genome-encoded proteins, including at least some of the essential transmembrane subunits of the mitochondrial respiratory chain. The mitoribosomes are attached to the mitochondrial inner membrane and translation products are cotranslationally integrated into the membrane. This Schizosaccharomyces pombe (strain 972 / ATCC 24843) (Fission yeast) protein is Small ribosomal subunit protein uS4m (nam9).